A 133-amino-acid polypeptide reads, in one-letter code: MSGKGKVHGGKGKSSDSAKASTSHSARAGLQFPVGRIKRYLKRSAQNKVRVGSKSAIYLTAVLEYLTAEVLELAGNAAKDLKVKRITPRHLQLAIRGDEELDNLIKATIAYGGVLPHINKALLLKVEKKKQQK.

A compositionally biased stretch (basic residues) spans 1–11; it reads MSGKGKVHGGK. Positions 1-30 are disordered; sequence MSGKGKVHGGKGKSSDSAKASTSHSARAGL. Ser2 carries the post-translational modification N-acetylserine. N6-acetyllysine occurs at positions 4, 11, and 13. Residues 15–26 are compositionally biased toward low complexity; that stretch reads SDSAKASTSHSA.

This sequence belongs to the histone H2A family. The nucleosome is a histone octamer containing two molecules each of H2A, H2B, H3 and H4 assembled in one H3-H4 heterotetramer and two H2A-H2B heterodimers. The octamer wraps approximately 147 bp of DNA. H2A or its variant H2A.Z forms a heterodimer with H2B. H2A.Z associates with the VPS72/SWC2 subunit of the SWR1 chromatin remodeling complex. Also interacts with RBP1/DNA-directed RNA polymerase II largest subunit. Post-translationally, acetylated once deposited into chromatin.

It is found in the nucleus. It localises to the chromosome. Variant histone H2A which can replace H2A in some nucleosomes. Nucleosomes wrap and compact DNA into chromatin, limiting DNA accessibility to the cellular machineries which require DNA as a template. Histones thereby play a central role in transcription regulation, DNA repair, DNA replication and chromosomal stability. DNA accessibility is regulated via a complex set of post-translational modifications of histones, also called histone code, and nucleosome remodeling. This variant is enriched at promoters, it may keep them in a repressed state until the appropriate activation signal is received. Near telomeres, it may counteract gene silencing caused by the spread of heterochromatin proteins. Required for the RNA polymerase II and SPT15/TBP recruitment to the target genes. Involved in chromosome stability. The protein is Histone H2A.Z (HTZ1) of Meyerozyma guilliermondii (strain ATCC 6260 / CBS 566 / DSM 6381 / JCM 1539 / NBRC 10279 / NRRL Y-324) (Yeast).